A 196-amino-acid polypeptide reads, in one-letter code: MTYNPRDHYFRKAKQENFAARSVFKLEEIDQKFKMFKPGQVVLDLGASPGSWSQYASKMAGEKGRVLGVDLSPVTVKLKNAVFIQADLRDLNLEDIFKEHGFVPPFDIVMSDMAPKTTGIRMTDQARSMELCELALDVARRFLKKDGHFVCKLFHSDDFGKLRDEMKKTFAKVEAVKPDSTRKISKEIFLVGLSKK.

S-adenosyl-L-methionine-binding residues include glycine 50, tryptophan 52, aspartate 70, aspartate 87, and aspartate 112. The Proton acceptor role is filled by lysine 152.

Belongs to the class I-like SAM-binding methyltransferase superfamily. RNA methyltransferase RlmE family.

The protein resides in the cytoplasm. The catalysed reaction is uridine(2552) in 23S rRNA + S-adenosyl-L-methionine = 2'-O-methyluridine(2552) in 23S rRNA + S-adenosyl-L-homocysteine + H(+). Its function is as follows. Specifically methylates the uridine in position 2552 of 23S rRNA at the 2'-O position of the ribose in the fully assembled 50S ribosomal subunit. The sequence is that of Ribosomal RNA large subunit methyltransferase E from Bdellovibrio bacteriovorus (strain ATCC 15356 / DSM 50701 / NCIMB 9529 / HD100).